The sequence spans 400 residues: Phosphoglycerate kinase (400 aa).

Substrate-binding positions include Asp-22–Asn-24, Arg-38, His-61–Arg-64, Arg-119, and Arg-152. ATP is bound by residues Lys-205, Gly-296, Glu-327, and Gly-353–Thr-356.

This sequence belongs to the phosphoglycerate kinase family. As to quaternary structure, monomer.

Its subcellular location is the cytoplasm. It catalyses the reaction (2R)-3-phosphoglycerate + ATP = (2R)-3-phospho-glyceroyl phosphate + ADP. Its pathway is carbohydrate degradation; glycolysis; pyruvate from D-glyceraldehyde 3-phosphate: step 2/5. This Campylobacter lari (strain RM2100 / D67 / ATCC BAA-1060) protein is Phosphoglycerate kinase.